We begin with the raw amino-acid sequence, 114 residues long: MSDEMAVPLQFTDAAANKVKSLIADEDNPNLKLRVYITGGGCSGFQYGFTFDDKVNDGDMTIEKLGVALVVDAMSLQYLVGGSVDYTEGLEGSRFIVNNPNAKTTCGCGSSFSI.

Iron-sulfur cluster is bound by residues Cys-42, Cys-106, and Cys-108.

The protein belongs to the HesB/IscA family. In terms of assembly, homodimer. The cofactor is iron-sulfur cluster.

Functionally, required for insertion of 4Fe-4S clusters for at least IspG. In Edwardsiella ictaluri (strain 93-146), this protein is Iron-sulfur cluster insertion protein ErpA.